A 257-amino-acid polypeptide reads, in one-letter code: Zinc import ATP-binding protein ZnuC (257 aa).

An ABC transporter domain is found at 6–221; sequence IRLDQVGVTF…PAFVELFGKT (216 aa). 38–45 is a binding site for ATP; it reads GPNGAGKT.

Belongs to the ABC transporter superfamily. Zinc importer (TC 3.A.1.15.5) family. The complex is composed of two ATP-binding proteins (ZnuC), two transmembrane proteins (ZnuB) and a solute-binding protein (ZnuA).

The protein resides in the cell inner membrane. The catalysed reaction is Zn(2+)(out) + ATP(in) + H2O(in) = Zn(2+)(in) + ADP(in) + phosphate(in) + H(+)(in). Its function is as follows. Part of the ABC transporter complex ZnuABC involved in zinc import. Responsible for energy coupling to the transport system. The polypeptide is Zinc import ATP-binding protein ZnuC (Pseudomonas putida (strain ATCC 47054 / DSM 6125 / CFBP 8728 / NCIMB 11950 / KT2440)).